Consider the following 146-residue polypeptide: UPF0178 protein BcerKBAB4_2842 (146 aa).

This sequence belongs to the UPF0178 family.

The protein is UPF0178 protein BcerKBAB4_2842 of Bacillus mycoides (strain KBAB4) (Bacillus weihenstephanensis).